The following is a 200-amino-acid chain: Lipopolysaccharide core heptose(II)-phosphate phosphatase (200 aa).

An N-terminal signal peptide occupies residues 1-25 (MLAFCRSSLKSKKYFIILLALAAIA).

Belongs to the phosphoglycerate mutase family. Ais subfamily.

Its subcellular location is the periplasm. It functions in the pathway bacterial outer membrane biogenesis; lipopolysaccharide metabolism. Functionally, catalyzes the dephosphorylation of heptose(II) of the outer membrane lipopolysaccharide core. The sequence is that of Lipopolysaccharide core heptose(II)-phosphate phosphatase from Escherichia coli O6:H1 (strain CFT073 / ATCC 700928 / UPEC).